We begin with the raw amino-acid sequence, 288 residues long: 4-hydroxy-tetrahydrodipicolinate synthase (288 aa).

Residue Thr-43 participates in pyruvate binding. The Proton donor/acceptor role is filled by Tyr-131. Residue Lys-160 is the Schiff-base intermediate with substrate of the active site. Ile-200 is a pyruvate binding site.

It belongs to the DapA family. As to quaternary structure, homotetramer; dimer of dimers.

It localises to the cytoplasm. It carries out the reaction L-aspartate 4-semialdehyde + pyruvate = (2S,4S)-4-hydroxy-2,3,4,5-tetrahydrodipicolinate + H2O + H(+). The protein operates within amino-acid biosynthesis; L-lysine biosynthesis via DAP pathway; (S)-tetrahydrodipicolinate from L-aspartate: step 3/4. Its function is as follows. Catalyzes the condensation of (S)-aspartate-beta-semialdehyde [(S)-ASA] and pyruvate to 4-hydroxy-tetrahydrodipicolinate (HTPA). The polypeptide is 4-hydroxy-tetrahydrodipicolinate synthase (Methanococcus aeolicus (strain ATCC BAA-1280 / DSM 17508 / OCM 812 / Nankai-3)).